The sequence spans 389 residues: Acyl-[acyl-carrier-protein] dehydrogenase MbtN (389 aa).

The protein belongs to the acyl-CoA dehydrogenase family. It depends on FAD as a cofactor.

Its pathway is siderophore biosynthesis; mycobactin biosynthesis. Functionally, catalyzes the dehydrogenation at the alpha-beta position of ACP-bound acyl chains. This results in the introduction of a double bond in the lipidic chain, which is further transferred to the epsilon-amino group of lysine residue in the mycobactin core by MbtK. In Mycobacterium sp. (strain MCS), this protein is Acyl-[acyl-carrier-protein] dehydrogenase MbtN (mbtN).